Consider the following 318-residue polypeptide: Protoheme IX farnesyltransferase (318 aa).

The next 9 membrane-spanning stretches (helical) occupy residues 31-51, 55-75, 98-118, 125-145, 153-173, 181-201, 206-228, 238-260, and 285-305; these read IILL…QGPL, LAIA…TLNC, IQPF…FILL, LAAG…THGL, IVIG…AVTG, ILFA…ALMI, AAVK…QILA, LALA…LLGL, and FSIF…LPGA.

The protein belongs to the UbiA prenyltransferase family. Protoheme IX farnesyltransferase subfamily.

It is found in the cell inner membrane. The catalysed reaction is heme b + (2E,6E)-farnesyl diphosphate + H2O = Fe(II)-heme o + diphosphate. Its pathway is porphyrin-containing compound metabolism; heme O biosynthesis; heme O from protoheme: step 1/1. In terms of biological role, converts heme B (protoheme IX) to heme O by substitution of the vinyl group on carbon 2 of heme B porphyrin ring with a hydroxyethyl farnesyl side group. This is Protoheme IX farnesyltransferase from Synechococcus elongatus (strain ATCC 33912 / PCC 7942 / FACHB-805) (Anacystis nidulans R2).